The primary structure comprises 259 residues: uncharacterized protein (259 aa).

A signal peptide spans 1-22 (MKHSKKLLLCISFLLITFFISG). Cys23 is lipidated: N-palmitoyl cysteine. Cys23 carries the S-diacylglycerol cysteine lipid modification.

This sequence belongs to the staphylococcal tandem lipoprotein family.

The protein localises to the cell membrane. This is an uncharacterized protein from Staphylococcus epidermidis (strain ATCC 35984 / DSM 28319 / BCRC 17069 / CCUG 31568 / BM 3577 / RP62A).